Here is a 290-residue protein sequence, read N- to C-terminus: S-methyl-5'-thioadenosine phosphorylase 2 (290 aa).

Residues Ser14, 57–58, and 90–91 each bind phosphate; these read RH and SA. Met185 is a substrate binding site. A phosphate-binding site is contributed by Ser186. Residue 209-211 participates in substrate binding; the sequence is DYD.

It belongs to the PNP/MTAP phosphorylase family. MTAP subfamily. In terms of assembly, homotrimer.

The protein localises to the cytoplasm. The protein resides in the nucleus. The enzyme catalyses S-methyl-5'-thioadenosine + phosphate = 5-(methylsulfanyl)-alpha-D-ribose 1-phosphate + adenine. It participates in amino-acid biosynthesis; L-methionine biosynthesis via salvage pathway; S-methyl-5-thio-alpha-D-ribose 1-phosphate from S-methyl-5'-thioadenosine (phosphorylase route): step 1/1. In terms of biological role, catalyzes the reversible phosphorylation of S-methyl-5'-thioadenosine (MTA) to adenine and 5-methylthioribose-1-phosphate. Involved in the breakdown of MTA, a major by-product of polyamine biosynthesis. Responsible for the first step in the methionine salvage pathway after MTA has been generated from S-adenosylmethionine. Has broad substrate specificity with 6-aminopurine nucleosides as preferred substrates. In Puccinia graminis f. sp. tritici (strain CRL 75-36-700-3 / race SCCL) (Black stem rust fungus), this protein is S-methyl-5'-thioadenosine phosphorylase 2.